We begin with the raw amino-acid sequence, 2084 residues long: RNA-directed RNA polymerase L (2084 aa).

The endonuclease stretch occupies residues 20–221 (EPGLYDQIYD…IELQKSEEEL (202 aa)). Mn(2+)-binding residues include His80, Asp112, and Glu126. Lys145 acts as the For endonuclease activity in catalysis. The RdRp catalytic domain maps to 969–1172 (SARSLGPGSI…FGIYSSEKST (204 aa)). Asp1127 serves as a coordination point for Mg(2+). The segment at 1695–1810 (AQSGTLGGFS…TDGCPVRIME (116 aa)) is cap-binding.

It belongs to the Bunyavirales RNA polymerase family. Homomultimer. Interacts with the glycoprotein N; this interaction allows efficient polymerase packaging into virus particles. Interacts with nucleoprotein N. It depends on Mn(2+) as a cofactor. Mg(2+) is required as a cofactor.

The protein resides in the host Golgi apparatus. It localises to the host endoplasmic reticulum. It is found in the host endoplasmic reticulum-Golgi intermediate compartment. The protein localises to the virion. It carries out the reaction RNA(n) + a ribonucleoside 5'-triphosphate = RNA(n+1) + diphosphate. Inhibited by Baloxavir acid (BXA). RNA-dependent RNA polymerase, which is responsible for the replication and transcription of the viral RNA genome using antigenomic RNA as an intermediate. During transcription, synthesizes subgenomic RNAs and assures their capping by a cap-snatching mechanism, which involves the endonuclease activity cleaving the host capped pre-mRNAs. These short capped RNAs are then used as primers for viral transcription. The 3'-end of subgenomic mRNAs molecules are not polyadenylated. During replication, the polymerase binds the 5' and 3' vRNA extremities at distinct sites. In turn, significant conformational changes occur in the polymerase and in vRNA to initiate active RNA synthesis. As a consequence of the use of the same enzyme for both transcription and replication, these mechanisms need to be well coordinated. The polypeptide is RNA-directed RNA polymerase L (Dabie bandavirus (Severe fever with thrombocytopenia virus)).